The chain runs to 313 residues: Porphobilinogen deaminase (313 aa).

Position 242 is an S-(dipyrrolylmethanemethyl)cysteine (Cys242).

Belongs to the HMBS family. In terms of assembly, monomer. Requires dipyrromethane as cofactor.

It catalyses the reaction 4 porphobilinogen + H2O = hydroxymethylbilane + 4 NH4(+). It participates in porphyrin-containing compound metabolism; protoporphyrin-IX biosynthesis; coproporphyrinogen-III from 5-aminolevulinate: step 2/4. In terms of biological role, tetrapolymerization of the monopyrrole PBG into the hydroxymethylbilane pre-uroporphyrinogen in several discrete steps. In Pseudomonas syringae pv. syringae (strain B728a), this protein is Porphobilinogen deaminase.